The chain runs to 533 residues: D-3-phosphoglycerate dehydrogenase (533 aa).

Ala2 carries the N-acetylalanine modification. At Ser14 the chain carries Phosphoserine. Lys21 carries the post-translational modification N6-acetyllysine; alternate. Lys21 participates in a covalent cross-link: Glycyl lysine isopeptide (Lys-Gly) (interchain with G-Cter in SUMO1); alternate. Residue Lys21 forms a Glycyl lysine isopeptide (Lys-Gly) (interchain with G-Cter in SUMO2); alternate linkage. Lys58 is subject to N6-acetyllysine. NAD(+)-binding positions include Thr78, 155–156, Asp175, Thr207, 234–236, and Asp260; these read RI and CAR. Thr78 carries the phosphothreonine modification. Arg236 is a catalytic residue. Residue Glu265 is part of the active site. His283 serves as the catalytic Proton donor. 283 to 286 is an NAD(+) binding site; that stretch reads HLGA.

It belongs to the D-isomer specific 2-hydroxyacid dehydrogenase family. In terms of assembly, homotetramer.

The catalysed reaction is (2R)-3-phosphoglycerate + NAD(+) = 3-phosphooxypyruvate + NADH + H(+). The enzyme catalyses (R)-2-hydroxyglutarate + NAD(+) = 2-oxoglutarate + NADH + H(+). It carries out the reaction (S)-malate + NAD(+) = oxaloacetate + NADH + H(+). Its pathway is amino-acid biosynthesis; L-serine biosynthesis; L-serine from 3-phospho-D-glycerate: step 1/3. Catalyzes the reversible oxidation of 3-phospho-D-glycerate to 3-phosphonooxypyruvate, the first step of the phosphorylated L-serine biosynthesis pathway. Also catalyzes the reversible oxidation of 2-hydroxyglutarate to 2-oxoglutarate and the reversible oxidation of (S)-malate to oxaloacetate. The chain is D-3-phosphoglycerate dehydrogenase (PHGDH) from Homo sapiens (Human).